A 542-amino-acid polypeptide reads, in one-letter code: Chaperonin GroEL 2 (542 aa).

ATP is bound by residues 30–33 (TLGP), K51, 87–91 (DGTTT), G415, and D496.

Belongs to the chaperonin (HSP60) family. In terms of assembly, forms a cylinder of 14 subunits composed of two heptameric rings stacked back-to-back. Interacts with the co-chaperonin GroES.

The protein localises to the cytoplasm. It carries out the reaction ATP + H2O + a folded polypeptide = ADP + phosphate + an unfolded polypeptide.. Functionally, together with its co-chaperonin GroES, plays an essential role in assisting protein folding. The GroEL-GroES system forms a nano-cage that allows encapsulation of the non-native substrate proteins and provides a physical environment optimized to promote and accelerate protein folding. This Chelativorans sp. (strain BNC1) protein is Chaperonin GroEL 2.